The following is a 203-amino-acid chain: RNA pyrophosphohydrolase (203 aa).

In terms of domain architecture, Nudix hydrolase spans 6–149 (GFRPNVGIIL…KRNVYQMALT (144 aa)). The Nudix box signature appears at 38-59 (GGIKHGESPEQAMFRELHEEVG). Positions 170-203 (RAHRRDEGSEHNDHLDPTGPHDAGASVSEPKQAE) are disordered. Residues 173-185 (RRDEGSEHNDHLD) show a composition bias toward basic and acidic residues.

The protein belongs to the Nudix hydrolase family. RppH subfamily. A divalent metal cation is required as a cofactor.

Accelerates the degradation of transcripts by removing pyrophosphate from the 5'-end of triphosphorylated RNA, leading to a more labile monophosphorylated state that can stimulate subsequent ribonuclease cleavage. This chain is RNA pyrophosphohydrolase, found in Leptothrix cholodnii (strain ATCC 51168 / LMG 8142 / SP-6) (Leptothrix discophora (strain SP-6)).